A 237-amino-acid chain; its full sequence is tRNA(His) guanylyltransferase (237 aa).

The Mg(2+) site is built by aspartate 29, glycine 30, and aspartate 77. GTP contacts are provided by residues 29 to 34 and 76 to 77; these read DGKHFH and SD.

Belongs to the tRNA(His) guanylyltransferase family. Mg(2+) serves as cofactor.

It catalyses the reaction a 5'-end ribonucleotide-tRNA(His) + GTP + ATP + H2O = a 5'-end phospho-guanosine-ribonucleotide-tRNA(His) + AMP + 2 diphosphate + H(+). Its function is as follows. Adds a GMP to the 5'-end of tRNA(His) after transcription and RNase P cleavage. This Eremothecium gossypii (strain ATCC 10895 / CBS 109.51 / FGSC 9923 / NRRL Y-1056) (Yeast) protein is tRNA(His) guanylyltransferase (THG1).